The primary structure comprises 249 residues: MKKLLLIAAASTALLTSGLSFADCDMNSSVDSSTNSSMSSSVENQWYLKLNAGGVIFNKTKPKGADFKLNNIKSNIKSNTGFTGEIGAGYYIMDNLRTDLTIGTVASSHLKKSKTYPDGNSFSVKNKPTIVSVLLNGYVDFVDLSMFKVFAGAGVGAAFVKEKIHSKDIKGGVTDTFNGTTKNKTNFAYQLSLGTSFEVAQGVKAELVYSWRDYGKTKNTTKTINGDKVKFGGTHYKGHNLMAGLRFDM.

The N-terminal stretch at 1–22 (MKKLLLIAAASTALLTSGLSFA) is a signal peptide.

Functionally, adheres to biotinylated epithelial (Vero cell) proteins. The protein is Putative adhesin RC1281 of Rickettsia conorii (strain ATCC VR-613 / Malish 7).